A 45-amino-acid chain; its full sequence is Putative purine permease 9 (45 aa).

In terms of tissue distribution, not detected in seedlings, leaves, embryos or root and shoot meristems.

This Arabidopsis thaliana (Mouse-ear cress) protein is Putative purine permease 9.